The primary structure comprises 76 residues: MSSGALLPKPQMRGLLAKRLRVHIVGAFVVALGVAAAYKFGVAEPRKKAYADFYRNYDSMKDFEEMRQAGVFQSAK.

Residues 4–14 (GALLPKPQMRG) are Mitochondrial matrix-facing. The chain crosses the membrane as a helical span at residues 15–55 (LLAKRLRVHIVGAFVVALGVAAAYKFGVAEPRKKAYADFYR). Residues 56 to 76 (NYDSMKDFEEMRQAGVFQSAK) lie on the Mitochondrial intermembrane side of the membrane. Phosphoserine is present on S74.

This sequence belongs to the cytochrome c oxidase subunit 6c family. As to quaternary structure, component of the cytochrome c oxidase (complex IV, CIV), a multisubunit enzyme composed of 14 subunits. The complex is composed of a catalytic core of 3 subunits MT-CO1, MT-CO2 and MT-CO3, encoded in the mitochondrial DNA, and 11 supernumerary subunits COX4I, COX5A, COX5B, COX6A, COX6B, COX6C, COX7A, COX7B, COX7C, COX8 and NDUFA4, which are encoded in the nuclear genome. The complex exists as a monomer or a dimer and forms supercomplexes (SCs) in the inner mitochondrial membrane with NADH-ubiquinone oxidoreductase (complex I, CI) and ubiquinol-cytochrome c oxidoreductase (cytochrome b-c1 complex, complex III, CIII), resulting in different assemblies (supercomplex SCI(1)III(2)IV(1) and megacomplex MCI(2)III(2)IV(2)).

It is found in the mitochondrion inner membrane. Its pathway is energy metabolism; oxidative phosphorylation. In terms of biological role, component of the cytochrome c oxidase, the last enzyme in the mitochondrial electron transport chain which drives oxidative phosphorylation. The respiratory chain contains 3 multisubunit complexes succinate dehydrogenase (complex II, CII), ubiquinol-cytochrome c oxidoreductase (cytochrome b-c1 complex, complex III, CIII) and cytochrome c oxidase (complex IV, CIV), that cooperate to transfer electrons derived from NADH and succinate to molecular oxygen, creating an electrochemical gradient over the inner membrane that drives transmembrane transport and the ATP synthase. Cytochrome c oxidase is the component of the respiratory chain that catalyzes the reduction of oxygen to water. Electrons originating from reduced cytochrome c in the intermembrane space (IMS) are transferred via the dinuclear copper A center (CU(A)) of subunit 2 and heme A of subunit 1 to the active site in subunit 1, a binuclear center (BNC) formed by heme A3 and copper B (CU(B)). The BNC reduces molecular oxygen to 2 water molecules using 4 electrons from cytochrome c in the IMS and 4 protons from the mitochondrial matrix. The protein is Cytochrome c oxidase subunit 6C-2 (Cox6c2) of Rattus norvegicus (Rat).